Reading from the N-terminus, the 154-residue chain is Probable deoxyuridine 5'-triphosphate nucleotidohydrolase (154 aa).

It belongs to the dCTP deaminase family. Archaeal dUTPase subfamily.

The enzyme catalyses dUTP + H2O = dUMP + diphosphate + H(+). It participates in pyrimidine metabolism; dUMP biosynthesis; dUMP from dCTP (dUTP route): step 2/2. This enzyme is involved in nucleotide metabolism: it produces dUMP, the immediate precursor of thymidine nucleotides and it decreases the intracellular concentration of dUTP so that uracil cannot be incorporated into DNA. The protein is Probable deoxyuridine 5'-triphosphate nucleotidohydrolase of Methanopyrus kandleri (strain AV19 / DSM 6324 / JCM 9639 / NBRC 100938).